Consider the following 101-residue polypeptide: Small ribosomal subunit protein uS14 (101 aa).

The protein belongs to the universal ribosomal protein uS14 family. In terms of assembly, part of the 30S ribosomal subunit. Contacts proteins S3 and S10.

In terms of biological role, binds 16S rRNA, required for the assembly of 30S particles and may also be responsible for determining the conformation of the 16S rRNA at the A site. This Protochlamydia amoebophila (strain UWE25) protein is Small ribosomal subunit protein uS14.